The sequence spans 382 residues: Dual-specificity RNA methyltransferase RlmN (382 aa).

The active-site Proton acceptor is Glu-96. The region spanning 102–342 is the Radical SAM core domain; the sequence is QGKRGTLCVS…VRTTRGEDID (241 aa). Cysteines 109 and 345 form a disulfide. [4Fe-4S] cluster is bound by residues Cys-116, Cys-120, and Cys-123. S-adenosyl-L-methionine is bound by residues 170–171, Ser-202, 224–226, and Asn-302; these read GE and SLH. Catalysis depends on Cys-345, which acts as the S-methylcysteine intermediate.

This sequence belongs to the radical SAM superfamily. RlmN family. [4Fe-4S] cluster serves as cofactor.

It localises to the cytoplasm. The catalysed reaction is adenosine(2503) in 23S rRNA + 2 reduced [2Fe-2S]-[ferredoxin] + 2 S-adenosyl-L-methionine = 2-methyladenosine(2503) in 23S rRNA + 5'-deoxyadenosine + L-methionine + 2 oxidized [2Fe-2S]-[ferredoxin] + S-adenosyl-L-homocysteine. The enzyme catalyses adenosine(37) in tRNA + 2 reduced [2Fe-2S]-[ferredoxin] + 2 S-adenosyl-L-methionine = 2-methyladenosine(37) in tRNA + 5'-deoxyadenosine + L-methionine + 2 oxidized [2Fe-2S]-[ferredoxin] + S-adenosyl-L-homocysteine. In terms of biological role, specifically methylates position 2 of adenine 2503 in 23S rRNA and position 2 of adenine 37 in tRNAs. m2A2503 modification seems to play a crucial role in the proofreading step occurring at the peptidyl transferase center and thus would serve to optimize ribosomal fidelity. The protein is Dual-specificity RNA methyltransferase RlmN of Pseudomonas fluorescens (strain Pf0-1).